A 147-amino-acid chain; its full sequence is Deoxyuridine 5'-triphosphate nucleotidohydrolase (147 aa).

Arg-24 is a binding site for Mg(2+). Residues 68–70 (PRS), 82–85 (GVID), Tyr-88, Gly-93, Ile-95, and Arg-111 each bind dUTP.

It belongs to the dUTPase family. Mg(2+) serves as cofactor.

The enzyme catalyses dUTP + H2O = dUMP + diphosphate + H(+). Functionally, this enzyme is involved in nucleotide metabolism: it produces dUMP, the immediate precursor of thymidine nucleotides and it decreases the intracellular concentration of dUTP so that uracil cannot be incorporated into DNA. The protein is Deoxyuridine 5'-triphosphate nucleotidohydrolase (OPG046) of Camelus.